The chain runs to 282 residues: Ubiquinone biosynthesis protein COQ4 homolog, mitochondrial (282 aa).

The transit peptide at 1–30 (MFVRKSCYSLINATRRCLRYRQLSSTTAGT) directs the protein to the mitochondrion. The Zn(2+) site is built by histidine 186, aspartate 187, histidine 190, and glutamate 202.

Belongs to the COQ4 family. Component of a multi-subunit COQ enzyme complex. Requires Zn(2+) as cofactor.

It is found in the mitochondrion inner membrane. The enzyme catalyses a 4-hydroxy-3-methoxy-5-(all-trans-polyprenyl)benzoate + H(+) = a 2-methoxy-6-(all-trans-polyprenyl)phenol + CO2. The protein operates within cofactor biosynthesis; ubiquinone biosynthesis. Lyase that catalyzes the C1-decarboxylation of 4-hydroxy-3-methoxy-5-(all-trans-polyprenyl)benzoic acid into 2-methoxy-6-(all-trans-polyprenyl)phenol during ubiquinone biosynthesis. This is Ubiquinone biosynthesis protein COQ4 homolog, mitochondrial from Anopheles gambiae (African malaria mosquito).